Here is a 162-residue protein sequence, read N- to C-terminus: ATP synthase subunit b', chloroplastic (162 aa).

The chain crosses the membrane as a helical span at residues 26-46 (ATLPLQALQFILLTVLLTFIF).

This sequence belongs to the ATPase B chain family. As to quaternary structure, F-type ATPases have 2 components, F(1) - the catalytic core - and F(0) - the membrane proton channel. F(1) has five subunits: alpha(3), beta(3), gamma(1), delta(1), epsilon(1). F(0) has four main subunits: a(1), b(1), b'(1) and c(10-14). The alpha and beta chains form an alternating ring which encloses part of the gamma chain. F(1) is attached to F(0) by a central stalk formed by the gamma and epsilon chains, while a peripheral stalk is formed by the delta, b and b' chains.

The protein localises to the plastid. It is found in the chloroplast thylakoid membrane. In terms of biological role, f(1)F(0) ATP synthase produces ATP from ADP in the presence of a proton or sodium gradient. F-type ATPases consist of two structural domains, F(1) containing the extramembraneous catalytic core and F(0) containing the membrane proton channel, linked together by a central stalk and a peripheral stalk. During catalysis, ATP synthesis in the catalytic domain of F(1) is coupled via a rotary mechanism of the central stalk subunits to proton translocation. Its function is as follows. Component of the F(0) channel, it forms part of the peripheral stalk, linking F(1) to F(0). The b'-subunit is a diverged and duplicated form of b found in plants and photosynthetic bacteria. This chain is ATP synthase subunit b', chloroplastic, found in Emiliania huxleyi (Coccolithophore).